We begin with the raw amino-acid sequence, 747 residues long: Asparagine synthetase [glutamine-hydrolyzing] 2 (747 aa).

The active-site For GATase activity is the Cys2. A Glutamine amidotransferase type-2 domain is found at 2 to 218 (CGLAGIINLA…AGHYLEINLT (217 aa)). Residues 52–56 (RLSIL), 77–79 (NGE), and Asp100 contribute to the L-glutamine site. Position 395-396 (395-396 (SP)) interacts with ATP.

This sequence belongs to the asparagine synthetase family.

It catalyses the reaction L-aspartate + L-glutamine + ATP + H2O = L-asparagine + L-glutamate + AMP + diphosphate + H(+). It participates in amino-acid biosynthesis; L-asparagine biosynthesis; L-asparagine from L-aspartate (L-Gln route): step 1/1. This chain is Asparagine synthetase [glutamine-hydrolyzing] 2 (asnH), found in Bacillus subtilis (strain 168).